The primary structure comprises 101 residues: Protein translation factor SUI1 homolog (101 aa).

The protein belongs to the SUI1 family.

The chain is Protein translation factor SUI1 homolog from Methanosphaera stadtmanae (strain ATCC 43021 / DSM 3091 / JCM 11832 / MCB-3).